A 455-amino-acid polypeptide reads, in one-letter code: DNA N(6)-methyladenine demethylase ALKBH1C (455 aa).

2 disordered regions span residues 1 to 114 and 173 to 194; these read MNHS…AGDN and SSVE…SNES. Residues 345–455 form the Fe2OG dioxygenase domain; it reads LPDICIVNFY…GRLNLTFRQY (111 aa). 352–354 is a binding site for 2-oxoglutarate; sequence NFY. Residues H363, D365, and H423 each coordinate Fe cation. 447–453 lines the 2-oxoglutarate pocket; sequence RLNLTFR.

The protein belongs to the alkB family. The cofactor is Fe(2+). As to expression, expressed at low levels in roots and seedlings, but barely in cauline leaves, rosette leaves, stems, siliques and flowers.

The protein resides in the nucleus. It is found in the cytoplasm. The catalysed reaction is an N(6)-methyl-2'-deoxyadenosine in DNA + 2-oxoglutarate + O2 = a 2'-deoxyadenosine in DNA + formaldehyde + succinate + CO2. Dioxygenase that catalyzes DNA N(6)-methyladenine (6 mA) demethylation with a low efficiency. The sequence is that of DNA N(6)-methyladenine demethylase ALKBH1C from Arabidopsis thaliana (Mouse-ear cress).